Consider the following 492-residue polypeptide: Endoglycoceramidase I (492 aa).

The first 14 residues, 1 to 14 (MRKTVVAFAAAIAA), serve as a signal peptide directing secretion. The N-palmitoyl cysteine moiety is linked to residue C15. C15 carries the S-diacylglycerol cysteine lipid modification. Substrate is bound by residues K61, D62, 131 to 133 (HQD), and 213 to 214 (NE). Residue E214 is the Proton donor of the active site. A disulfide bond links C224 and C229. Residues N265, Q298, and Y302 each contribute to the substrate site. A disulfide bond links C294 and C313. The active-site Nucleophile is E339. W365 contributes to the substrate binding site. The disordered stretch occupies residues 467–492 (NRPGSAGAEVPDGPIETSSSGSSGSS).

Belongs to the glycosyl hydrolase 5 (cellulase A) family.

Its subcellular location is the secreted. The protein resides in the membrane. The enzyme catalyses an oligoglycosyl-(1-&gt;4)-beta-D-glucosyl-(1&lt;-&gt;1)-ceramide + H2O = an oligoglycosyl-(1-&gt;4)-D-glucose + an N-acyl-sphingoid base. It carries out the reaction a ganglioside GM3 + H2O = N-acetyl-alpha-neuraminosyl-(2-&gt;3)-beta-D-galactosyl-(1-&gt;4)-D-glucose + an N-acyl-sphingoid base. It catalyses the reaction a ganglioside GM1 + H2O = beta-D-Gal-(1-&gt;3)-beta-D-GalNAc-(1-&gt;4)-[alpha-Neu5Ac-(2-&gt;3)]-beta-D-Gal-(1-&gt;4)-D-Glc + an N-acyl-sphingoid base. The catalysed reaction is a ganglioside Fuc-GM1 + H2O = alpha-Fuc-(1-&gt;2)-beta-Gal-(1-&gt;3)-beta-GalNAc-(1-&gt;4)-[alpha-Neu5Ac-(2-&gt;3)]-beta-Gal-(1-&gt;4)-Glc + an N-acyl-sphingoid base. The enzyme catalyses a beta-D-galactosyl-(1-&gt;4)-beta-D-glucosyl-(1&lt;-&gt;1)-ceramide + H2O = lactose + an N-acyl-sphingoid base. In terms of biological role, hydrolyzes glycosphingolipids; exhibits broad substrate specificity including monosialodihexosylganglioside (GM3), monosialotetrahexosylganglioside (GM1), fucosyl-GM1, lactosylceramide, globotriosylceramide, globotetraosylceramide, ganglioside GD1a, and ganglioside GD1b. No activity towards glucosylceramide and galactosylceramide. The chain is Endoglycoceramidase I from Rhodococcus hoagii (strain 103S) (Rhodococcus equi).